Here is an 821-residue protein sequence, read N- to C-terminus: Spindle apparatus protein lin-5 (821 aa).

The tract at residues glutamate 161–serine 199 is disordered. Positions alanine 162–glutamine 180 are enriched in polar residues. Positions threonine 181–serine 199 are enriched in low complexity. The stretch at lysine 211 to lysine 634 forms a coiled coil. 2 disordered regions span residues arginine 736 to serine 758 and leucine 779 to glutamine 821.

Interacts with gpr-1; gpr-1 forms a complex with gpr-2 and GDP-bound goa-1.

It is found in the cytoplasm. The protein resides in the cell cortex. The protein localises to the cytoskeleton. It localises to the spindle. Its subcellular location is the chromosome. It is found in the centromere. The protein resides in the kinetochore. The protein localises to the microtubule organizing center. It localises to the centrosome. Essential component of the spindle apparatus required for spindle positioning and chromosome movement. Acts to recruit or anchor gpr-1/gpr-2 complex to the spindle and cortex. Also involved, directly or indirectly, in cytokinesis and in the coupling of DNA replication, centrosome duplication and mitotic division. This Caenorhabditis elegans protein is Spindle apparatus protein lin-5 (lin-5).